The sequence spans 351 residues: Cytochrome c biogenesis protein CcsA (351 aa).

The next 8 helical transmembrane spans lie at 12 to 32, 37 to 57, 68 to 88, 97 to 117, 143 to 163, 259 to 279, 294 to 314, and 320 to 340; these read NISF…AAFP, LSIL…TLLG, ISNL…IHLI, LVGV…ALTL, MMLS…FLII, IIGL…VWAN, WALI…TKGW, and AILA…VNLL.

The protein belongs to the CcmF/CycK/Ccl1/NrfE/CcsA family. In terms of assembly, may interact with ccs1.

It localises to the cellular thylakoid membrane. In terms of biological role, required during biogenesis of c-type cytochromes (cytochrome c6 and cytochrome f) at the step of heme attachment. The protein is Cytochrome c biogenesis protein CcsA of Trichodesmium erythraeum (strain IMS101).